A 355-amino-acid polypeptide reads, in one-letter code: RNA 3'-terminal phosphate cyclase (355 aa).

ATP is bound by residues Gln-109 and 291 to 295 (HLADQ). The Tele-AMP-histidine intermediate role is filled by His-316.

It belongs to the RNA 3'-terminal cyclase family. Type 1 subfamily.

The protein localises to the cytoplasm. It catalyses the reaction a 3'-end 3'-phospho-ribonucleotide-RNA + ATP = a 3'-end 2',3'-cyclophospho-ribonucleotide-RNA + AMP + diphosphate. Functionally, catalyzes the conversion of 3'-phosphate to a 2',3'-cyclic phosphodiester at the end of RNA. The mechanism of action of the enzyme occurs in 3 steps: (A) adenylation of the enzyme by ATP; (B) transfer of adenylate to an RNA-N3'P to produce RNA-N3'PP5'A; (C) and attack of the adjacent 2'-hydroxyl on the 3'-phosphorus in the diester linkage to produce the cyclic end product. The biological role of this enzyme is unknown but it is likely to function in some aspects of cellular RNA processing. In Koribacter versatilis (strain Ellin345), this protein is RNA 3'-terminal phosphate cyclase.